The chain runs to 366 residues: Phospho-N-acetylmuramoyl-pentapeptide-transferase (366 aa).

10 consecutive transmembrane segments (helical) span residues 27 to 47, 71 to 91, 93 to 113, 138 to 158, 174 to 194, 205 to 225, 245 to 265, 268 to 288, 297 to 317, and 343 to 363; these read AALF…IASL, TPTM…LLWA, LSSI…AIGF, FVIA…AGAA, LMLN…VGAG, GLAI…AYLA, LAVI…FNAP, AIFM…TVAV, VIIG…VFWF, and QVVI…LSTL.

Belongs to the glycosyltransferase 4 family. MraY subfamily. Mg(2+) serves as cofactor.

The protein resides in the cell inner membrane. It carries out the reaction UDP-N-acetyl-alpha-D-muramoyl-L-alanyl-gamma-D-glutamyl-meso-2,6-diaminopimeloyl-D-alanyl-D-alanine + di-trans,octa-cis-undecaprenyl phosphate = di-trans,octa-cis-undecaprenyl diphospho-N-acetyl-alpha-D-muramoyl-L-alanyl-D-glutamyl-meso-2,6-diaminopimeloyl-D-alanyl-D-alanine + UMP. It participates in cell wall biogenesis; peptidoglycan biosynthesis. Catalyzes the initial step of the lipid cycle reactions in the biosynthesis of the cell wall peptidoglycan: transfers peptidoglycan precursor phospho-MurNAc-pentapeptide from UDP-MurNAc-pentapeptide onto the lipid carrier undecaprenyl phosphate, yielding undecaprenyl-pyrophosphoryl-MurNAc-pentapeptide, known as lipid I. The chain is Phospho-N-acetylmuramoyl-pentapeptide-transferase from Sinorhizobium medicae (strain WSM419) (Ensifer medicae).